The chain runs to 135 residues: Transcription antitermination protein NusB (135 aa).

It belongs to the NusB family.

Involved in transcription antitermination. Required for transcription of ribosomal RNA (rRNA) genes. Binds specifically to the boxA antiterminator sequence of the ribosomal RNA (rrn) operons. The chain is Transcription antitermination protein NusB from Wolinella succinogenes (strain ATCC 29543 / DSM 1740 / CCUG 13145 / JCM 31913 / LMG 7466 / NCTC 11488 / FDC 602W) (Vibrio succinogenes).